Consider the following 264-residue polypeptide: uncharacterized protein (264 aa).

An N-terminal signal peptide occupies residues 1–26 (MMKKLFHSTLIVLLFFSFFGVQPIHA).

This is an uncharacterized protein from Bacillus subtilis (strain 168).